The sequence spans 257 residues: Type III pantothenate kinase (257 aa).

Residue 6–13 participates in ATP binding; that stretch reads DVGNTSTK. 109 to 112 is a binding site for substrate; sequence GADR. The active-site Proton acceptor is the D111. Position 132 (D132) interacts with K(+). ATP is bound at residue T135. T187 lines the substrate pocket.

This sequence belongs to the type III pantothenate kinase family. In terms of assembly, homodimer. It depends on NH4(+) as a cofactor. Requires K(+) as cofactor.

Its subcellular location is the cytoplasm. The catalysed reaction is (R)-pantothenate + ATP = (R)-4'-phosphopantothenate + ADP + H(+). The protein operates within cofactor biosynthesis; coenzyme A biosynthesis; CoA from (R)-pantothenate: step 1/5. Catalyzes the phosphorylation of pantothenate (Pan), the first step in CoA biosynthesis. The protein is Type III pantothenate kinase of Anaplasma marginale (strain Florida).